We begin with the raw amino-acid sequence, 269 residues long: Putative hydro-lyase M446_2125 (269 aa).

It belongs to the D-glutamate cyclase family.

The chain is Putative hydro-lyase M446_2125 from Methylobacterium sp. (strain 4-46).